We begin with the raw amino-acid sequence, 365 residues long: Elongation factor Tu (365 aa).

Residues His1 to Thr7, Asp62 to His66, and Asn117 to Asp120 each bind GTP. One can recognise a tr-type G domain in the interval His1–Glu185. Thr7 is a binding site for Mg(2+).

This sequence belongs to the TRAFAC class translation factor GTPase superfamily. Classic translation factor GTPase family. EF-Tu/EF-1A subfamily. As to quaternary structure, monomer.

It localises to the cytoplasm. The catalysed reaction is GTP + H2O = GDP + phosphate + H(+). In terms of biological role, GTP hydrolase that promotes the GTP-dependent binding of aminoacyl-tRNA to the A-site of ribosomes during protein biosynthesis. The protein is Elongation factor Tu of Buchnera aphidicola subsp. Schlechtendalia chinensis.